Here is a 438-residue protein sequence, read N- to C-terminus: MARPLLGKTSSVRRRLESLSACSIFFFLRKFCQKMASLVFLNSPVYQMSNILLTERRQVDRAMGGSDDDGVMVVALSPSDFKTVLGSALLAVERDMVHVVPKYLQTPGILHDMLVLLTPIFGEALSVDMSGATDVMVQQIATAGFVDVDPLHSSVSWKDNVSCPVALLAVSNAVRTMMGQPCQVTLIIDVGTQNILRDLVNLPVEMSGDLQVMAYTKDPLGKVPAVGVSVFDSGSVQKGDAHSVGAPDGLVSFHTHPVSSAVELNYHAGWPSNVDMSSLLTMKNLMHVVVAEEGLWTMARTLSMQRLTKVLTDAEKDVMRAAAFNLFLPLNELRVMGTKDSNNKSLKTYFEVFETFTIGALMKHSGVTPTAFVDRRWLDNTIYHMGFIPWGRDMRFVVEYDLDGTNPFLNTVPTLMSVKRKAKIQEMFDNMVSRMVTS.

An N-terminal signal peptide occupies residues 1 to 32; sequence MARPLLGKTSSVRRRLESLSACSIFFFLRKFC.

This is an uncharacterized protein from Frog virus 3 (isolate Goorha) (FV-3).